A 211-amino-acid chain; its full sequence is Ribonuclease HII (211 aa).

The region spanning 16–205 (APVCGVDEAG…VKAALAAAAV (190 aa)) is the RNase H type-2 domain. A divalent metal cation-binding residues include aspartate 22, glutamate 23, and aspartate 114.

The protein belongs to the RNase HII family. Mn(2+) is required as a cofactor. Mg(2+) serves as cofactor.

The protein localises to the cytoplasm. The enzyme catalyses Endonucleolytic cleavage to 5'-phosphomonoester.. In terms of biological role, endonuclease that specifically degrades the RNA of RNA-DNA hybrids. In Caulobacter vibrioides (strain ATCC 19089 / CIP 103742 / CB 15) (Caulobacter crescentus), this protein is Ribonuclease HII (rnhB).